The primary structure comprises 728 residues: Double-strand break repair protein mre-11 (728 aa).

Acidic residues predominate over residues 1 to 12; the sequence is MCGSDDSFDDFV. The disordered stretch occupies residues 1–45; that stretch reads MCGSDDSFDDFVPDSQEPASSRTRNQDHLDDDEVPCSQRPDAAND. 4 residues coordinate Mn(2+): Asp-73, His-75, Asp-113, and Asn-181. His-182 (proton donor) is an active-site residue. Mn(2+) contacts are provided by His-269, His-301, and His-303. The disordered stretch occupies residues 601-728; that stretch reads KNPVADVEME…PSKKRDLSFF (128 aa). Residues 607 to 616 show a composition bias toward acidic residues; that stretch reads VEMEEDEDDP. The span at 622 to 632 shows a compositional bias: polar residues; that stretch reads PQSTSRTNYAS. Over residues 634–645 the composition is skewed to acidic residues; that stretch reads SEDEVANSDEEM.

The protein belongs to the MRE11/RAD32 family. In terms of assembly, component of the MRN complex composed of two heterodimers rad-50 and mre-11 associated with a single nbs-1. Mn(2+) serves as cofactor.

Its subcellular location is the nucleus. It localises to the chromosome. Functionally, core component of the MRN complex, which plays a central role in double-strand break (DSB) repair, DNA recombination, maintenance of telomere integrity and meiosis. The MRN complex is involved in the repair of DNA double-strand breaks (DSBs) via homologous recombination (HR), an error-free mechanism which primarily occurs during S and G2 phases. The complex (1) mediates the end resection of damaged DNA, which generates proper single-stranded DNA, a key initial steps in HR, and is (2) required for the recruitment of other repair factors and efficient activation of ATM and ATR upon DNA damage. Within the MRN complex, mre-11 possesses both single-strand endonuclease activity and double-strand-specific 3'-5' exonuclease activity. Mre-11 first endonucleolytically cleaves the 5' strand at DNA DSB ends to prevent non-homologous end joining (NHEJ) and licence HR. It then generates a single-stranded DNA gap via 3' to 5' exonucleolytic degradation, which is required for single-strand invasion and recombination. Required for meiotic crossing over and chiasma formation. Pachytene morphology and homolog pairing are normal. Vital in long term for maintenance of reproductive capacity of subsequent generations. This chain is Double-strand break repair protein mre-11, found in Caenorhabditis elegans.